A 1271-amino-acid polypeptide reads, in one-letter code: MEGESTESTQNTKVSDSAYSNSCSNSQSQRSGSSKSMLSGSHSSGSSGYGGKPSIQTSSSDMAIKRNKEKSRKKKKAKCTQAQATISSSLEGAEEQPHSSGTTCDQKILHVLATTQQLGDQPSSLDHKLGEQLEARHNCGVGKAEQPQSFSLPCPLSVSTLMPGIGVCHGGNAPGGKWEKTFESCKLDTGPAKTERVKEDSFCCVISMHDGIVLYTTPSITDVLGFPRDMWLGRSFIDFVHTKDRATFASQITTGIPIAESRCSMPKDARSTFCVMLRQYRGLQTSGYGVIGRSVNYEPFRLGMSFREAPEEERSDNYMVANSSNMLLVICATPIKSSYRVPEEIHSQRSPKFAIRHTAAGIISHVDSAAVSALGYLPQDLMGRSIMDLYHHDDLPVIKEIYESVMKKGQTAGASFCSKPYRFLIQNGCYILLETEWSSFVNPWSRKLEFVVGHHRVFQGPKICNVFETPPNSEPKIAEELQNKNTRIKEEIVNLLAEKVSRPSDTVKQEVSRRCQALASFMETLMDEVSRADLKLELPHENELTVSERDSVMLGEISPHHDYYDSKSSIETPPSYNQLNYNENLLRFFNSKPVTAPVEVDPPKVGSSDVSSTREDARSTLSPLNGFEGSGASGSSGHLTSGSNIHMSSATNTSNAGTGTGTVTGTGTIIATSGTGTVTCASGNMDANTSAAFNIAANTSAADNFGADTSAADTSGADTSAADNYAVDNYGPGNFGAENSCADNSGAENSCADNSGVDNSRPGNSGADNSAADNFGADNSGPDNSGADNSGPDNTGPDNSGAENSRAENSRADNSRPDHPRPDISGASNSRPDKTGPDKSGAENSASGSGSGTSGNEGPSSGGQDTRTTAGTPDSPPVSLTESLLNKHNDEMEKFMLKKHRESRGDRRTVEKNKNKTTNTIDSLKILEYSSTGPGHGTKRGGSYSWEGEGNKPKQQPTLNSVGVGTGAPEAPIPPVHPTHTTHTAIAQSSFSAQQSLFPTFYYIPATPLAASTPAPGALSPTPRNQKHHHHAHQHAPKVPDQASTSQQAAGPAAIPLQYVTGVMYPHPSLFYTHPAAAAATAMMYQPMPFPGIANAMQLPEQPSTSQSNYSKTVFSVIVAPPTITTTTATTTPKTQGAFHSITPAQLQRPSSQDTSVKTEPASNATPSHSSNKKKANSSIASGIGDYNSNQACSRNRANVKKYTDSNGNSDDMDGSSFSSFYSSFIKTTDGSESPPDNDKEAKHRKLKNITRLSSKIMEHPEEDQTQHGDG.

Over residues 1–14 (MEGESTESTQNTKV) the composition is skewed to polar residues. The interval 1–102 (MEGESTESTQ…AEEQPHSSGT (102 aa)) is disordered. Low complexity predominate over residues 15-46 (SDSAYSNSCSNSQSQRSGSSKSMLSGSHSSGS). The short motif at 65-78 (KRNKEKSRKKKKAK) is the Nuclear localization signal element. Residues 65–78 (KRNKEKSRKKKKAK) show a composition bias toward basic residues. The span at 80–90 (TQAQATISSSL) shows a compositional bias: polar residues. 2 PAS domains span residues 189–259 (TGPA…IPIA) and 339–409 (YRVP…MKKG). A disordered region spans residues 596-660 (APVEVDPPKV…TNTSNAGTGT (65 aa)). Tandem repeats lie at residues 657-658 (GT), 659-660 (GT), and 661-662 (GT). The segment at 657 to 677 (GTGTGTVTGTGTIIATSGTGT) is 8 X 2 AA approximate tandem repeats of G-T. One copy of the 4; approximate repeat lies at 663–664 (VT). 4 consecutive repeat copies span residues 665 to 666 (GT), 667 to 668 (GT), 674 to 675 (GT), and 676 to 677 (GT). Polar residues-rich tracts occupy residues 746–772 (GAEN…NSAA) and 781–803 (GPDN…SGAE). Disordered stretches follow at residues 746 to 913 (GAEN…VEKN), 928 to 956 (EYSS…PKQQ), 1014 to 1050 (PAPG…QQAA), 1143 to 1191 (TPAQ…NSNQ), and 1227 to 1271 (KTTD…HGDG). Basic and acidic residues-rich tracts occupy residues 805–822 (SRAE…HPRP) and 831–841 (RPDKTGPDKSG). Over residues 864 to 884 (QDTRTTAGTPDSPPVSLTESL) the composition is skewed to polar residues. 2 stretches are compositionally biased toward basic and acidic residues: residues 885 to 896 (LNKHNDEMEKFM) and 903 to 913 (SRGDRRTVEKN). Residues 1014–1023 (PAPGALSPTP) show a composition bias toward low complexity. Positions 1025-1036 (NQKHHHHAHQHA) are enriched in basic residues. Positions 1143–1167 (TPAQLQRPSSQDTSVKTEPASNATP) are enriched in polar residues. Over residues 1257–1271 (IMEHPEEDQTQHGDG) the composition is skewed to basic and acidic residues.

Forms a heterodimer with timeless (TIM); the complex then translocates into the nucleus. Post-translationally, phosphorylated with a circadian rhythmicity, probably by the double-time protein (dbt). Phosphorylation could be implicated in the stability of per monomer and in the formation of heterodimer per-tim.

The protein resides in the nucleus. It is found in the cytoplasm. Its subcellular location is the perinuclear region. Functionally, essential for biological clock functions. Determines the period length of circadian and ultradian rhythms; an increase in PER dosage leads to shortened circadian rhythms and a decrease leads to lengthened circadian rhythms. Essential for the circadian rhythmicity of locomotor activity, eclosion behavior, and for the rhythmic component of the male courtship song that originates in the thoracic nervous system. The biological cycle depends on the rhythmic formation and nuclear localization of the TIM-PER complex. Light induces the degradation of TIM, which promotes elimination of PER. Nuclear activity of the heterodimer coordinatively regulates PER and TIM transcription through a negative feedback loop. Behaves as a negative element in circadian transcriptional loop. Does not appear to bind DNA, suggesting indirect transcriptional inhibition. The chain is Period circadian protein (per) from Drosophila pseudoobscura pseudoobscura (Fruit fly).